The sequence spans 297 residues: Large ribosomal subunit protein uL18 (297 aa).

Glycine 2 carries the N-acetylglycine modification. An N6-acetyllysine mark is found at lysine 5 and lysine 48. Serine 185 carries the phosphoserine modification. Position 220 is an N6-acetyllysine; alternate (lysine 220). Lysine 220 is covalently cross-linked (Glycyl lysine isopeptide (Lys-Gly) (interchain with G-Cter in SUMO1); alternate). Residue lysine 220 forms a Glycyl lysine isopeptide (Lys-Gly) (interchain with G-Cter in SUMO2); alternate linkage. Position 232 is a phosphothreonine (threonine 232). The interval 252 to 297 is disordered; the sequence is VYEKKPKKEVKKKRWNRPKMSLAQKKDRVAQKKASFLRAQERAAES. The segment covering 258 to 268 has biased composition (basic residues); it reads KKEVKKKRWNR. Residue serine 272 is modified to Phosphoserine.

This sequence belongs to the universal ribosomal protein uL18 family. As to quaternary structure, component of the large ribosomal subunit (LSU). Part of the 5S RNP complex, which is a LSU subcomplex composed of the 5S RNA, RPL5 and RPL11. Component of a hexameric 5S RNP precursor complex, composed of 5S RNA, RRS1, RPF2/BXDC1, RPL5, RPL11 and HEATR3; this complex acts as a precursor for ribosome assembly. Interacts with NVL in an ATP-dependent manner. Interacts with RRP1B. Interacts with IPO5, IPO7 and KPNB1; these interactions may be involved in RPL5 nuclear import for the assembly of ribosomal subunits.

It is found in the cytoplasm. The protein resides in the nucleus. It localises to the nucleolus. Functionally, component of the ribosome, a large ribonucleoprotein complex responsible for the synthesis of proteins in the cell. The small ribosomal subunit (SSU) binds messenger RNAs (mRNAs) and translates the encoded message by selecting cognate aminoacyl-transfer RNA (tRNA) molecules. The large subunit (LSU) contains the ribosomal catalytic site termed the peptidyl transferase center (PTC), which catalyzes the formation of peptide bonds, thereby polymerizing the amino acids delivered by tRNAs into a polypeptide chain. The nascent polypeptides leave the ribosome through a tunnel in the LSU and interact with protein factors that function in enzymatic processing, targeting, and the membrane insertion of nascent chains at the exit of the ribosomal tunnel. As part of the 5S RNP/5S ribonucleoprotein particle it is an essential component of the LSU, required for its formation and the maturation of rRNAs. It also couples ribosome biogenesis to p53/TP53 activation. As part of the 5S RNP it accumulates in the nucleoplasm and inhibits MDM2, when ribosome biogenesis is perturbed, mediating the stabilization and the activation of TP53. This chain is Large ribosomal subunit protein uL18 (RPL5), found in Bos taurus (Bovine).